The primary structure comprises 301 residues: tRNA dimethylallyltransferase (301 aa).

Residue Gly8–Ser15 coordinates ATP. Residue Thr10–Ser15 participates in substrate binding. An interaction with substrate tRNA region spans residues Asp33–Gln36.

Belongs to the IPP transferase family. Monomer. Mg(2+) is required as a cofactor.

It carries out the reaction adenosine(37) in tRNA + dimethylallyl diphosphate = N(6)-dimethylallyladenosine(37) in tRNA + diphosphate. Functionally, catalyzes the transfer of a dimethylallyl group onto the adenine at position 37 in tRNAs that read codons beginning with uridine, leading to the formation of N6-(dimethylallyl)adenosine (i(6)A). This Tropheryma whipplei (strain Twist) (Whipple's bacillus) protein is tRNA dimethylallyltransferase.